A 502-amino-acid chain; its full sequence is Lipoyl synthase, apicoplast (502 aa).

The first 16 residues, Met1–Pro16, serve as a signal peptide directing secretion. 7 residues coordinate [4Fe-4S] cluster: Cys192, Cys197, Cys203, Cys218, Cys222, Cys225, and Ser433. Positions Trp204 to Lys422 constitute a Radical SAM core domain.

This sequence belongs to the radical SAM superfamily. Lipoyl synthase family. [4Fe-4S] cluster serves as cofactor.

It localises to the plastid. It is found in the apicoplast. It carries out the reaction [[Fe-S] cluster scaffold protein carrying a second [4Fe-4S](2+) cluster] + N(6)-octanoyl-L-lysyl-[protein] + 2 oxidized [2Fe-2S]-[ferredoxin] + 2 S-adenosyl-L-methionine + 4 H(+) = [[Fe-S] cluster scaffold protein] + N(6)-[(R)-dihydrolipoyl]-L-lysyl-[protein] + 4 Fe(3+) + 2 hydrogen sulfide + 2 5'-deoxyadenosine + 2 L-methionine + 2 reduced [2Fe-2S]-[ferredoxin]. It functions in the pathway protein modification; protein lipoylation via endogenous pathway; protein N(6)-(lipoyl)lysine from octanoyl-[acyl-carrier-protein]: step 2/2. Catalyzes the radical-mediated insertion of two sulfur atoms into the C-6 and C-8 positions of the octanoyl moiety bound to the lipoyl domains of lipoate-dependent enzymes, thereby converting the octanoylated domains into lipoylated derivatives. This is Lipoyl synthase, apicoplast from Plasmodium yoelii yoelii.